The sequence spans 597 residues: Cytosolic Fe-S cluster assembly factor nar1 (597 aa).

C20 lines the [4Fe-4S] cluster pocket. The interval 25–46 (ESLPQKESQSENPYEVTKEDKV) is disordered. Positions 61, 64, 67, 208, and 263 each coordinate [4Fe-4S] cluster. A disordered region spans residues 424–449 (RLPGAKPQAVSSSANRRQPMSRNAAP). Residues 432 to 444 (AVSSSANRRQPMS) show a composition bias toward polar residues. [4Fe-4S] cluster contacts are provided by C464 and C468.

Belongs to the NARF family.

Functionally, component of the cytosolic Fe/S protein assembly machinery. Required for maturation of extramitochondrial Fe/S proteins. May play a role in the transfer of pre-assembled Fe/S clusters to target apoproteins. This Aspergillus fumigatus (strain ATCC MYA-4609 / CBS 101355 / FGSC A1100 / Af293) (Neosartorya fumigata) protein is Cytosolic Fe-S cluster assembly factor nar1 (nar1).